A 397-amino-acid polypeptide reads, in one-letter code: Enoyl-[acyl-carrier-protein] reductase [NADH] FabV (397 aa).

Residues 48-53 (GASTGY), 74-75 (FE), 111-112 (DA), and 139-140 (LA) each bind NAD(+). Position 225 (Y225) interacts with substrate. Y235 acts as the Proton donor in catalysis. NAD(+) contacts are provided by residues K244 and 273–275 (VVT).

It belongs to the TER reductase family. As to quaternary structure, monomer.

The enzyme catalyses a 2,3-saturated acyl-[ACP] + NAD(+) = a (2E)-enoyl-[ACP] + NADH + H(+). It participates in lipid metabolism; fatty acid biosynthesis. With respect to regulation, resistant to triclosan. Involved in the final reduction of the elongation cycle of fatty acid synthesis (FAS II). Catalyzes the NADH-dependent reduction of the carbon-carbon double bond in the enoyl moiety that is covalently linked to an acyl carrier protein (ACP). The polypeptide is Enoyl-[acyl-carrier-protein] reductase [NADH] FabV (Aeromonas salmonicida (strain A449)).